We begin with the raw amino-acid sequence, 282 residues long: Phosphate import ATP-binding protein PstB (282 aa).

One can recognise an ABC transporter domain in the interval 36 to 277; that stretch reads IEVKNLNFFY…PARKETEDYI (242 aa). Position 68 to 75 (68 to 75) interacts with ATP; the sequence is GPSGCGKS.

Belongs to the ABC transporter superfamily. Phosphate importer (TC 3.A.1.7) family. The complex is composed of two ATP-binding proteins (PstB), two transmembrane proteins (PstC and PstA) and a solute-binding protein (PstS).

The protein localises to the cell inner membrane. It carries out the reaction phosphate(out) + ATP + H2O = ADP + 2 phosphate(in) + H(+). Its function is as follows. Part of the ABC transporter complex PstSACB involved in phosphate import. Responsible for energy coupling to the transport system. This chain is Phosphate import ATP-binding protein PstB, found in Burkholderia pseudomallei (strain 1710b).